Consider the following 541-residue polypeptide: Berberine bridge enzyme-like 1 (541 aa).

The first 20 residues, 1–20 (MKLSCLVFLIVSSLVSSSLA), serve as a signal peptide directing secretion. N-linked (GlcNAc...) asparagine glycans are attached at residues asparagine 25, asparagine 38, asparagine 73, asparagine 136, asparagine 302, asparagine 339, and asparagine 357. A disulfide bridge connects residues cysteine 35 and cysteine 98. The FAD-binding PCMH-type domain maps to 76-255 (TSPKPLLVIA…LSFKIKLVPV (180 aa)). A cross-link (6-(S-cysteinyl)-8alpha-(pros-histidyl)-FAD (His-Cys)) is located at residues 113–180 (HDYDGVSYIS…GTHGFPAGVC (68 aa)).

Belongs to the oxygen-dependent FAD-linked oxidoreductase family. The cofactor is FAD. In terms of processing, the FAD cofactor is bound via a bicovalent 6-S-cysteinyl, 8alpha-N1-histidyl FAD linkage. In terms of tissue distribution, accumulates in cell walls of etiolated hypocotyls.

The protein resides in the secreted. It localises to the cell wall. This Arabidopsis thaliana (Mouse-ear cress) protein is Berberine bridge enzyme-like 1.